The following is a 253-amino-acid chain: Phosphoribosylaminoimidazole-succinocarboxamide synthase (253 aa).

Belongs to the SAICAR synthetase family.

It catalyses the reaction 5-amino-1-(5-phospho-D-ribosyl)imidazole-4-carboxylate + L-aspartate + ATP = (2S)-2-[5-amino-1-(5-phospho-beta-D-ribosyl)imidazole-4-carboxamido]succinate + ADP + phosphate + 2 H(+). Its pathway is purine metabolism; IMP biosynthesis via de novo pathway; 5-amino-1-(5-phospho-D-ribosyl)imidazole-4-carboxamide from 5-amino-1-(5-phospho-D-ribosyl)imidazole-4-carboxylate: step 1/2. This Parvibaculum lavamentivorans (strain DS-1 / DSM 13023 / NCIMB 13966) protein is Phosphoribosylaminoimidazole-succinocarboxamide synthase.